We begin with the raw amino-acid sequence, 588 residues long: Urease subunit alpha (588 aa).

Positions 149 to 588 (GGIDTHIHFI…LPMAQRYFLF (440 aa)) constitute a Urease domain. Ni(2+) contacts are provided by His-154, His-156, and Lys-237. At Lys-237 the chain carries N6-carboxylysine. His-239 serves as a coordination point for substrate. Ni(2+) contacts are provided by His-266 and His-292. The active-site Proton donor is the His-340. Asp-380 contacts Ni(2+).

Belongs to the metallo-dependent hydrolases superfamily. Urease alpha subunit family. Heterotrimer of UreA (gamma), UreB (beta) and UreC (alpha) subunits. Three heterotrimers associate to form the active enzyme. Requires Ni cation as cofactor. In terms of processing, carboxylation allows a single lysine to coordinate two nickel ions.

It localises to the cytoplasm. The catalysed reaction is urea + 2 H2O + H(+) = hydrogencarbonate + 2 NH4(+). Its pathway is nitrogen metabolism; urea degradation; CO(2) and NH(3) from urea (urease route): step 1/1. The chain is Urease subunit alpha from Opitutus terrae (strain DSM 11246 / JCM 15787 / PB90-1).